We begin with the raw amino-acid sequence, 333 residues long: Fructose-1,6-bisphosphatase class 1 (333 aa).

Residues E92, D113, L115, and D116 each contribute to the Mg(2+) site. Residues 116–119 (DGSS), N209, Y242, and K272 each bind substrate. E278 contributes to the Mg(2+) binding site.

This sequence belongs to the FBPase class 1 family. Homotetramer. Requires Mg(2+) as cofactor.

The protein resides in the cytoplasm. The catalysed reaction is beta-D-fructose 1,6-bisphosphate + H2O = beta-D-fructose 6-phosphate + phosphate. It participates in carbohydrate biosynthesis; Calvin cycle. The chain is Fructose-1,6-bisphosphatase class 1 from Chlorobaculum tepidum (strain ATCC 49652 / DSM 12025 / NBRC 103806 / TLS) (Chlorobium tepidum).